A 571-amino-acid chain; its full sequence is Glutamate--tRNA ligase (571 aa).

The short motif at 114–124 (PNPNGPWHVGH) is the 'HIGH' region element. Positions 431 to 453 (KPLAGGPESASPPLHPNDEDRGR) are disordered.

The protein belongs to the class-I aminoacyl-tRNA synthetase family. Glutamate--tRNA ligase type 2 subfamily.

Its subcellular location is the cytoplasm. It catalyses the reaction tRNA(Glu) + L-glutamate + ATP = L-glutamyl-tRNA(Glu) + AMP + diphosphate. Catalyzes the attachment of glutamate to tRNA(Glu) in a two-step reaction: glutamate is first activated by ATP to form Glu-AMP and then transferred to the acceptor end of tRNA(Glu). This is Glutamate--tRNA ligase from Natronomonas pharaonis (strain ATCC 35678 / DSM 2160 / CIP 103997 / JCM 8858 / NBRC 14720 / NCIMB 2260 / Gabara) (Halobacterium pharaonis).